The primary structure comprises 465 residues: Pancreatic triacylglycerol lipase (465 aa).

Residues 1–16 form the signal peptide; that stretch reads MLLVWSLALLLGAVAG. 2 disulfides stabilise this stretch: Cys20–Cys26 and Cys107–Cys118. Residue Ser169 is the Nucleophile of the active site. The active-site Charge relay system is Asp193. Ca(2+) contacts are provided by Glu204, Arg207, Asp209, and Asp212. Cys254 and Cys278 form a disulfide bridge. The Charge relay system role is filled by His280. 3 disulfide bridges follow: Cys302–Cys313, Cys316–Cys321, and Cys449–Cys465. The PLAT domain maps to 355–465; the sequence is WRYKVSVTLS…EDVLLTLNAC (111 aa).

The protein belongs to the AB hydrolase superfamily. Lipase family. Forms a 1:1 stoichiometric complex with (pro)colipase/CLPS. Expressed in many tissues with highest expression in liver. During hibernation there is a significant increases in expression in heart, white adipose tissue (WAT), and testis; but not in pancreas.

The protein resides in the secreted. The enzyme catalyses a triacylglycerol + H2O = a diacylglycerol + a fatty acid + H(+). The catalysed reaction is 1,2,3-tributanoylglycerol + H2O = dibutanoylglycerol + butanoate + H(+). It carries out the reaction 1,2,3-tri-(9Z-octadecenoyl)-glycerol + H2O = di-(9Z)-octadecenoylglycerol + (9Z)-octadecenoate + H(+). It catalyses the reaction all-trans-retinyl hexadecanoate + H2O = all-trans-retinol + hexadecanoate + H(+). The enzyme catalyses 1,2-di-(9Z-octadecenoyl)-glycerol + H2O = (9Z-octadecenoyl)-glycerol + (9Z)-octadecenoate + H(+). Inhibited by bile salts, is reactivated by (pro)colipase/CLPS. Functionally, plays an important role in fat metabolism. It preferentially splits the esters of long-chain fatty acids at positions 1 and 3, producing mainly 2-monoacylglycerol and free fatty acids, and shows considerably higher activity against insoluble emulsified substrates than against soluble ones. Plays a role in hibernation as a key enzyme that shows high activity at low temperatures. When expressed in the hibernating heart it liberates fatty acids from triglycerides at temperatures as low as 0 degrees Celsius. This is Pancreatic triacylglycerol lipase (PNLIP) from Ictidomys tridecemlineatus (Thirteen-lined ground squirrel).